The following is a 322-amino-acid chain: Phosphatidylserine decarboxylase proenzyme (322 aa).

Active-site charge relay system; for autoendoproteolytic cleavage activity residues include Asp-90, His-147, and Ser-254. Residue Ser-254 is the Schiff-base intermediate with substrate; via pyruvic acid; for decarboxylase activity of the active site. Position 254 is a pyruvic acid (Ser); by autocatalysis (Ser-254). Positions 293-322 (PDAEPAPLPAEEIEAEHDASPLVDDKKDQV) are disordered. Residues 308 to 322 (EHDASPLVDDKKDQV) show a composition bias toward basic and acidic residues.

The protein belongs to the phosphatidylserine decarboxylase family. PSD-B subfamily. Prokaryotic type I sub-subfamily. Heterodimer of a large membrane-associated beta subunit and a small pyruvoyl-containing alpha subunit. Pyruvate is required as a cofactor. Is synthesized initially as an inactive proenzyme. Formation of the active enzyme involves a self-maturation process in which the active site pyruvoyl group is generated from an internal serine residue via an autocatalytic post-translational modification. Two non-identical subunits are generated from the proenzyme in this reaction, and the pyruvate is formed at the N-terminus of the alpha chain, which is derived from the carboxyl end of the proenzyme. The autoendoproteolytic cleavage occurs by a canonical serine protease mechanism, in which the side chain hydroxyl group of the serine supplies its oxygen atom to form the C-terminus of the beta chain, while the remainder of the serine residue undergoes an oxidative deamination to produce ammonia and the pyruvoyl prosthetic group on the alpha chain. During this reaction, the Ser that is part of the protease active site of the proenzyme becomes the pyruvoyl prosthetic group, which constitutes an essential element of the active site of the mature decarboxylase.

The protein resides in the cell membrane. It catalyses the reaction a 1,2-diacyl-sn-glycero-3-phospho-L-serine + H(+) = a 1,2-diacyl-sn-glycero-3-phosphoethanolamine + CO2. It participates in phospholipid metabolism; phosphatidylethanolamine biosynthesis; phosphatidylethanolamine from CDP-diacylglycerol: step 2/2. Functionally, catalyzes the formation of phosphatidylethanolamine (PtdEtn) from phosphatidylserine (PtdSer). This Escherichia coli (strain 55989 / EAEC) protein is Phosphatidylserine decarboxylase proenzyme.